A 253-amino-acid chain; its full sequence is 5'/3'-nucleotidase SurE (253 aa).

A divalent metal cation-binding residues include aspartate 8, aspartate 9, serine 39, and asparagine 92.

Belongs to the SurE nucleotidase family. It depends on a divalent metal cation as a cofactor.

The protein resides in the cytoplasm. It catalyses the reaction a ribonucleoside 5'-phosphate + H2O = a ribonucleoside + phosphate. The catalysed reaction is a ribonucleoside 3'-phosphate + H2O = a ribonucleoside + phosphate. The enzyme catalyses [phosphate](n) + H2O = [phosphate](n-1) + phosphate + H(+). Its function is as follows. Nucleotidase with a broad substrate specificity as it can dephosphorylate various ribo- and deoxyribonucleoside 5'-monophosphates and ribonucleoside 3'-monophosphates with highest affinity to 3'-AMP. Also hydrolyzes polyphosphate (exopolyphosphatase activity) with the preference for short-chain-length substrates (P20-25). Might be involved in the regulation of dNTP and NTP pools, and in the turnover of 3'-mononucleotides produced by numerous intracellular RNases (T1, T2, and F) during the degradation of various RNAs. The protein is 5'/3'-nucleotidase SurE of Escherichia fergusonii (strain ATCC 35469 / DSM 13698 / CCUG 18766 / IAM 14443 / JCM 21226 / LMG 7866 / NBRC 102419 / NCTC 12128 / CDC 0568-73).